A 142-amino-acid chain; its full sequence is Large ribosomal subunit protein uL11 (142 aa).

This sequence belongs to the universal ribosomal protein uL11 family. As to quaternary structure, part of the ribosomal stalk of the 50S ribosomal subunit. Interacts with L10 and the large rRNA to form the base of the stalk. L10 forms an elongated spine to which L12 dimers bind in a sequential fashion forming a multimeric L10(L12)X complex. One or more lysine residues are methylated.

Functionally, forms part of the ribosomal stalk which helps the ribosome interact with GTP-bound translation factors. The sequence is that of Large ribosomal subunit protein uL11 from Mycobacteroides abscessus (strain ATCC 19977 / DSM 44196 / CCUG 20993 / CIP 104536 / JCM 13569 / NCTC 13031 / TMC 1543 / L948) (Mycobacterium abscessus).